The primary structure comprises 114 residues: U-myrmeciitoxin(01)-Mg8a (114 aa).

The first 20 residues, 1–20 (MKLSTLLVAFVLLVITVILS), serve as a signal peptide directing secretion. Residues 21–44 (TPSTNAKALAESNALAVAVSEAEP) constitute a propeptide that is removed on maturation.

It belongs to the formicidae venom precursor-01 superfamily. In terms of tissue distribution, expressed by the venom gland.

The protein resides in the secreted. Functionally, may have antimicrobial properties, like most ant linear peptides. The protein is U-myrmeciitoxin(01)-Mg8a of Myrmecia gulosa (Red bulldog ant).